The primary structure comprises 242 residues: MLMTTNEPVNAGDLAAREAAALYRLMTWLSPAFPVGGFSYSSGIEWAVEAGDITDTATLADWLDTMLGDGSGFCDATFLVQAYRATEAGEETSLRDIAELASAFVPSRERQLETTSQGRAFIDIARAAWDAEGLDAMVAACRTPLVYPVAVGVVAAMHGVPLAPTLHAFLHAVVSNWISAASRLIPLGQTDSQRVLVRLEAAVAATATRALSATLDDLGSATFRADLASLRHETQYTRLFRS.

Belongs to the UreF family. As to quaternary structure, ureD, UreF and UreG form a complex that acts as a GTP-hydrolysis-dependent molecular chaperone, activating the urease apoprotein by helping to assemble the nickel containing metallocenter of UreC. The UreE protein probably delivers the nickel.

It is found in the cytoplasm. In terms of biological role, required for maturation of urease via the functional incorporation of the urease nickel metallocenter. The sequence is that of Urease accessory protein UreF from Bradyrhizobium diazoefficiens (strain JCM 10833 / BCRC 13528 / IAM 13628 / NBRC 14792 / USDA 110).